Consider the following 469-residue polypeptide: Dihydrolipoyl dehydrogenase (469 aa).

FAD contacts are provided by residues 40 to 48 (EKAVLGGVC), lysine 57, and alanine 120. Cysteine 48 and cysteine 53 are joined by a disulfide. NAD(+) is bound by residues 186-190 (GGGAI), glutamate 209, and 275-278 (AVGV). FAD contacts are provided by aspartate 317 and alanine 325. Histidine 450 acts as the Proton acceptor in catalysis.

The protein belongs to the class-I pyridine nucleotide-disulfide oxidoreductase family. In terms of assembly, homodimer. The cofactor is FAD.

The protein resides in the cytoplasm. It catalyses the reaction N(6)-[(R)-dihydrolipoyl]-L-lysyl-[protein] + NAD(+) = N(6)-[(R)-lipoyl]-L-lysyl-[protein] + NADH + H(+). In terms of biological role, lipoamide dehydrogenase is a component of the alpha-ketoacid dehydrogenase complexes. This is Dihydrolipoyl dehydrogenase (lpd) from Chlorobaculum tepidum (strain ATCC 49652 / DSM 12025 / NBRC 103806 / TLS) (Chlorobium tepidum).